Reading from the N-terminus, the 190-residue chain is Protein GrpE (190 aa).

A compositionally biased stretch (polar residues) spans 1–11 (MSNQDEPQNSP). The segment at 1–36 (MSNQDEPQNSPEEFAEDQQADVALEEASSDSSETAA) is disordered. Acidic residues predominate over residues 13 to 28 (EFAEDQQADVALEEAS).

This sequence belongs to the GrpE family. Homodimer.

Its subcellular location is the cytoplasm. In terms of biological role, participates actively in the response to hyperosmotic and heat shock by preventing the aggregation of stress-denatured proteins, in association with DnaK and GrpE. It is the nucleotide exchange factor for DnaK and may function as a thermosensor. Unfolded proteins bind initially to DnaJ; upon interaction with the DnaJ-bound protein, DnaK hydrolyzes its bound ATP, resulting in the formation of a stable complex. GrpE releases ADP from DnaK; ATP binding to DnaK triggers the release of the substrate protein, thus completing the reaction cycle. Several rounds of ATP-dependent interactions between DnaJ, DnaK and GrpE are required for fully efficient folding. The sequence is that of Protein GrpE from Teredinibacter turnerae (strain ATCC 39867 / T7901).